Here is a 575-residue protein sequence, read N- to C-terminus: Putative export ATP-binding/permease protein RBE_0492 (575 aa).

One can recognise an ABC transmembrane type-1 domain in the interval 20 to 303 (LIIVIISLLS…IFELLSEMHL (284 aa)). 6 helical membrane-spanning segments follow: residues 21–41 (IIVI…GNVF), 61–81 (ILYI…RSYF), 135–155 (FLSF…LMFF), 158–178 (FKLA…IIKF), 242–262 (ALFF…VIWI), and 277–297 (IISF…IFEL). Residues 336 to 571 (LEFKNVNFSY…SDLYRTIYKE (236 aa)) enclose the ABC transporter domain. ATP is bound at residue 371–378 (GRSGSGKS).

It belongs to the ABC transporter superfamily. In terms of assembly, homodimer.

It is found in the cell inner membrane. In terms of biological role, part of an ABC transporter complex. Transmembrane domains (TMD) form a pore in the inner membrane and the ATP-binding domain (NBD) is responsible for energy generation. The polypeptide is Putative export ATP-binding/permease protein RBE_0492 (Rickettsia bellii (strain RML369-C)).